The chain runs to 693 residues: MSKRDFLLEIGLEELPARFVSDGEKQLADKVESFLKEQRISFEQISSFSTPRRLAVLVIGLAEKQADVEEESRGPAKKIALDESGNWTKAAQGFARGQGVSVDDLYIQEVKGTEYIFAKKFVAGQETASLLPELKELITSLHFPKNMRWHTYSLRYARPIQWLVALYGQEVIPFEITGVAAGLETAGHRFLGENVTIDEPTLYKEKLLQQYVMADSEERKKAIRHQIQSIMEEKDWVIPIDEDLLDEVTNLVEYPTALFGRFDEAFLSLPNEVLITSMREHQRYFPVKNQAGELLPYFVTIRNGDHRHLENIVKGNEKVLRARLSDAAFFYGEDQKLNIDEANKRLDQIVYHEELGSIGDKIKRVKVLAASIAEKLGVTSQTLQAINRVAEICKFDLVTQMVGEFPELQGRMGEVYAEIAGEPPEVAKGIVEHYLPRFAGDQSPSSVQGTVVSLADKLDTIAACFGIGLIPTGSQDPYALRRQAAGVVQILLDHELDLDVDELLLETVEQLQEKELLTVPESEVVKQLREFFALRVKTKLQDEGVRYDLTDAVLASGISNVPVVFKKAKLLVSKVNTPEFKELVEGLSRVTNIAGKAEKNVAINPDLFEKEEERVLYEAYVQTKDLVQGALASGDVSAAYAALEQTIEPIHQYFEHVMVMVDEQVIKENRLALMHAFAGVIGSYANFQEIVFK.

It belongs to the class-II aminoacyl-tRNA synthetase family. As to quaternary structure, tetramer of two alpha and two beta subunits.

It is found in the cytoplasm. The enzyme catalyses tRNA(Gly) + glycine + ATP = glycyl-tRNA(Gly) + AMP + diphosphate. In Halalkalibacterium halodurans (strain ATCC BAA-125 / DSM 18197 / FERM 7344 / JCM 9153 / C-125) (Bacillus halodurans), this protein is Glycine--tRNA ligase beta subunit (glyS).